The primary structure comprises 480 residues: M-phase inducer phosphatase cdc-25.2 (480 aa).

Positions 1 to 20 (MNRPSQISQDVAQPLSNQHE) are enriched in polar residues. Positions 1 to 35 (MNRPSQISQDVAQPLSNQHETAMMSSDEDSMSRDS) are disordered. One can recognise a Rhodanese domain in the interval 243-349 (FDDKYILIDC…FFFAANEANI (107 aa)). A disordered region spans residues 411-452 (TSAPSTSTENIDTNDDCQKSRTPAVPRIASRRNLFSDPSHSP).

This sequence belongs to the MPI phosphatase family.

It carries out the reaction O-phospho-L-tyrosyl-[protein] + H2O = L-tyrosyl-[protein] + phosphate. Functionally, required for intestinal cell division following the 16E cell stage of embryogenesis. Regulates intestinal cell divisions and binucleations probably by modulating the activity of the cell cycle regulator wee-1.3 and by activating the cdk-1/cyb-1 complex. Plays a role in male tail development, via regulation of the cell divisions of the ray precursor cell lineages, perhaps acting together with cell cycle regulators cyl-1, cdk-1, cyb-3, and cyd-1. In Caenorhabditis elegans, this protein is M-phase inducer phosphatase cdc-25.2.